Reading from the N-terminus, the 127-residue chain is Ribosome-binding factor A (127 aa).

Belongs to the RbfA family. As to quaternary structure, monomer. Binds 30S ribosomal subunits, but not 50S ribosomal subunits or 70S ribosomes.

Its subcellular location is the cytoplasm. Its function is as follows. One of several proteins that assist in the late maturation steps of the functional core of the 30S ribosomal subunit. Associates with free 30S ribosomal subunits (but not with 30S subunits that are part of 70S ribosomes or polysomes). Required for efficient processing of 16S rRNA. May interact with the 5'-terminal helix region of 16S rRNA. This Glaesserella parasuis serovar 5 (strain SH0165) (Haemophilus parasuis) protein is Ribosome-binding factor A.